A 330-amino-acid chain; its full sequence is MTMRSSSPSSSSSYSLAFTSLSNRLETIFKKASELCTLCDIEACVIYYGPDGELKTWPKEKEKVRDIALRYSLLNEALRRKKSVNLHGFLNKKKNKGLKNPNKKMKTSLKNVNILKYPLADHYPPDQVSPLIQSLELHVSKFQERLRFLESQKQNQTKPDHQSLTPSSLNHYTQSLNPSQFSLFMYNHGDNTLSQIPVSASNFNQDYFSALLEESELKNQLMKPEICGYDQNQNMSMGDITNNKFQDPCVSNKEAVQESVNNFGLNQLMYKEFYGCDQNMSMGNINSNSFQNPCVSNTQHYSAVEESVKNPWLNQLMQNELYGYGYAGFC.

The MADS-box domain occupies 19-61 (TSLSNRLETIFKKASELCTLCDIEACVIYYGPDGELKTWPKEK).

In terms of assembly, interacts with MEE14/CBP1.

It is found in the nucleus. Functionally, probable transcription factor that may function in the maintenance of the proper function of the central cell in pollen tube attraction. The sequence is that of Agamous-like MADS-box protein AGL75 from Arabidopsis thaliana (Mouse-ear cress).